The chain runs to 129 residues: Large ribosomal subunit protein bL17 (129 aa).

This sequence belongs to the bacterial ribosomal protein bL17 family. In terms of assembly, part of the 50S ribosomal subunit. Contacts protein L32.

This chain is Large ribosomal subunit protein bL17, found in Stutzerimonas stutzeri (strain A1501) (Pseudomonas stutzeri).